The primary structure comprises 250 residues: NAD(P)H-quinone oxidoreductase subunit K (250 aa).

Positions 60, 61, 125, and 156 each coordinate [4Fe-4S] cluster. The interval 230–250 is disordered; that stretch reads ELNTPEIDVSPASQSSSTYES. Polar residues predominate over residues 240–250; that stretch reads PASQSSSTYES.

Belongs to the complex I 20 kDa subunit family. As to quaternary structure, NDH-1 can be composed of about 15 different subunits; different subcomplexes with different compositions have been identified which probably have different functions. [4Fe-4S] cluster serves as cofactor.

It is found in the cellular thylakoid membrane. The catalysed reaction is a plastoquinone + NADH + (n+1) H(+)(in) = a plastoquinol + NAD(+) + n H(+)(out). It carries out the reaction a plastoquinone + NADPH + (n+1) H(+)(in) = a plastoquinol + NADP(+) + n H(+)(out). In terms of biological role, NDH-1 shuttles electrons from an unknown electron donor, via FMN and iron-sulfur (Fe-S) centers, to quinones in the respiratory and/or the photosynthetic chain. The immediate electron acceptor for the enzyme in this species is believed to be plastoquinone. Couples the redox reaction to proton translocation, and thus conserves the redox energy in a proton gradient. Cyanobacterial NDH-1 also plays a role in inorganic carbon-concentration. The polypeptide is NAD(P)H-quinone oxidoreductase subunit K (Prochlorococcus marinus (strain MIT 9313)).